The chain runs to 387 residues: Zinc finger protein neuro-d4 (387 aa).

Glycyl lysine isopeptide (Lys-Gly) (interchain with G-Cter in SUMO2) cross-links involve residues Lys-106, Lys-129, and Lys-133. A C2H2-type zinc finger spans residues 195–218 (YVCDICGKRYKNRPGLSYHYTHTH). PHD-type zinc fingers lie at residues 271–328 (NGYC…CKSC) and 325–375 (CKSC…CLRH). Residues Cys-274, Cys-277, Cys-293, Cys-296, His-301, Cys-304, Cys-322, Cys-325, Cys-328, Cys-331, Cys-343, Cys-346, His-351, Cys-354, Cys-369, and Cys-372 each contribute to the Zn(2+) site.

Belongs to the requiem/DPF family. Component of neuron-specific chromatin remodeling complex (nBAF complex) composed of at least, ARID1A/BAF250A or ARID1B/BAF250B, SMARCD1/BAF60A, SMARCD3/BAF60C, SMARCA2/BRM/BAF190B, SMARCA4/BRG1/BAF190A, SMARCB1/BAF47, SMARCC1/BAF155, SMARCE1/BAF57, SMARCC2/BAF170, DPF1/BAF45B, DPF3/BAF45C, ACTL6B/BAF53B and actin. As to expression, at embryonic stages, predominant expression in the nervous system. Expressed specifically in postmitotic neurons (at protein level).

The protein localises to the cytoplasm. Its subcellular location is the nucleus. May have an important role in developing neurons by participating in regulation of cell survival, possibly as a neurospecific transcription factor. Belongs to the neuron-specific chromatin remodeling complex (nBAF complex). During neural development a switch from a stem/progenitor to a postmitotic chromatin remodeling mechanism occurs as neurons exit the cell cycle and become committed to their adult state. The transition from proliferating neural stem/progenitor cells to postmitotic neurons requires a switch in subunit composition of the npBAF and nBAF complexes. As neural progenitors exit mitosis and differentiate into neurons, npBAF complexes which contain ACTL6A/BAF53A and PHF10/BAF45A, are exchanged for homologous alternative ACTL6B/BAF53B and DPF1/BAF45B or DPF3/BAF45C subunits in neuron-specific complexes (nBAF). The npBAF complex is essential for the self-renewal/proliferative capacity of the multipotent neural stem cells. The nBAF complex along with CREST plays a role regulating the activity of genes essential for dendrite growth. The sequence is that of Zinc finger protein neuro-d4 from Mus musculus (Mouse).